A 74-amino-acid chain; its full sequence is Dermaseptin-B3 (74 aa).

The first 22 residues, 1–22, serve as a signal peptide directing secretion; it reads MAFLKKSVFLVLFLGLVSLSIC. A propeptide spanning residues 23-43 is cleaved from the precursor; the sequence is EEEKREEENEEKQEDDEQSEE.

Expressed by the skin glands.

Its subcellular location is the secreted. Functionally, possesses a potent antimicrobial activity against Gram-positive and Gram-negative bacteria. Probably acts by disturbing membrane functions with its amphipathic structure. The chain is Dermaseptin-B3 from Phyllomedusa bicolor (Two-colored leaf frog).